A 258-amino-acid chain; its full sequence is Transcription factor TT2 (258 aa).

HTH myb-type domains follow at residues 11–63 (REEL…KNYL) and 64–118 (RPGI…RKRL). 2 consecutive DNA-binding regions (H-T-H motif) follow at residues 39-63 (WSTL…KNYL) and 91-114 (WSLI…NSNL). An ATP-binding site is contributed by 47–54 (GLKRCGKS).

As to quaternary structure, interacts with BHLH2/EGL3/MYC146, BHLH12/MYC1 and BHLH42/TT8. Expressed at a high level in immature siliques and at a lower level in flowers. Undetected in young seedlings, roots, leaves and inflorescence stems.

It localises to the nucleus. Transcription activator, when associated with BHLH2/EGL3/MYC146, BHLH12/MYC1, or BHLH42/TT8. Involved in the control of flavonoid late metabolism in developing siliques. Plays a key role in determining the tissue-specific activation of leucoanthocyanidin reductase (BANYULS). The chain is Transcription factor TT2 (TT2) from Arabidopsis thaliana (Mouse-ear cress).